We begin with the raw amino-acid sequence, 245 residues long: 1-(5-phosphoribosyl)-5-[(5-phosphoribosylamino)methylideneamino] imidazole-4-carboxamide isomerase (245 aa).

D8 serves as the catalytic Proton acceptor. D131 acts as the Proton donor in catalysis.

The protein belongs to the HisA/HisF family.

It is found in the cytoplasm. It carries out the reaction 1-(5-phospho-beta-D-ribosyl)-5-[(5-phospho-beta-D-ribosylamino)methylideneamino]imidazole-4-carboxamide = 5-[(5-phospho-1-deoxy-D-ribulos-1-ylimino)methylamino]-1-(5-phospho-beta-D-ribosyl)imidazole-4-carboxamide. Its pathway is amino-acid biosynthesis; L-histidine biosynthesis; L-histidine from 5-phospho-alpha-D-ribose 1-diphosphate: step 4/9. The chain is 1-(5-phosphoribosyl)-5-[(5-phosphoribosylamino)methylideneamino] imidazole-4-carboxamide isomerase from Neisseria meningitidis serogroup C / serotype 2a (strain ATCC 700532 / DSM 15464 / FAM18).